The sequence spans 1264 residues: ATP-dependent helicase/nuclease subunit A (1264 aa).

A UvrD-like helicase ATP-binding domain is found at 12–482 (EQFTDSQWQA…IILAENFRSR (471 aa)). An ATP-binding site is contributed by 33–40 (ASAGSGKT). The 289-residue stretch at 520–808 (SEAADYSTEL…RVMTIHASKG (289 aa)) folds into the UvrD-like helicase C-terminal domain.

This sequence belongs to the helicase family. AddA subfamily. In terms of assembly, heterodimer of AddA and AddB/RexB. Requires Mg(2+) as cofactor.

The enzyme catalyses Couples ATP hydrolysis with the unwinding of duplex DNA by translocating in the 3'-5' direction.. The catalysed reaction is ATP + H2O = ADP + phosphate + H(+). In terms of biological role, the heterodimer acts as both an ATP-dependent DNA helicase and an ATP-dependent, dual-direction single-stranded exonuclease. Recognizes the chi site generating a DNA molecule suitable for the initiation of homologous recombination. The AddA nuclease domain is required for chi fragment generation; this subunit has the helicase and 3' -&gt; 5' nuclease activities. The protein is ATP-dependent helicase/nuclease subunit A of Enterococcus faecalis (strain ATCC 700802 / V583).